The following is a 383-amino-acid chain: Putative glutamate--cysteine ligase 2 (383 aa).

It belongs to the glutamate--cysteine ligase type 2 family. YbdK subfamily.

It catalyses the reaction L-cysteine + L-glutamate + ATP = gamma-L-glutamyl-L-cysteine + ADP + phosphate + H(+). ATP-dependent carboxylate-amine ligase which exhibits weak glutamate--cysteine ligase activity. The polypeptide is Putative glutamate--cysteine ligase 2 (Legionella pneumophila subsp. pneumophila (strain Philadelphia 1 / ATCC 33152 / DSM 7513)).